The chain runs to 685 residues: Kinesin-like protein KIP2 (685 aa).

Disordered regions lie at residues 11–46 and 63–101; these read EHVG…GPAQ and SRPS…SGAS. A compositionally biased stretch (low complexity) spans 86 to 101; it reads GSPQSPDAPSSASGAS. Positions 113–446 constitute a Kinesin motor domain; it reads NVSVAIRIKP…VRFASRAKNI (334 aa). ATP is bound at residue 185 to 192; that stretch reads GMTGSGKT. 2 coiled-coil regions span residues 464–486 and 520–663; these read IIQN…RRSA and LEVE…SALS. Residues 485–510 are disordered; sequence SAAAPSGNGSTSPLDSPGVGGTSLSE.

This sequence belongs to the TRAFAC class myosin-kinesin ATPase superfamily. Kinesin family.

Its subcellular location is the cytoplasm. It localises to the cytoskeleton. In terms of biological role, required for assembly of the mitotic spindle. This Eremothecium gossypii (strain ATCC 10895 / CBS 109.51 / FGSC 9923 / NRRL Y-1056) (Yeast) protein is Kinesin-like protein KIP2 (KIP2).